A 211-amino-acid polypeptide reads, in one-letter code: Thiamine-phosphate synthase (211 aa).

4-amino-2-methyl-5-(diphosphooxymethyl)pyrimidine contacts are provided by residues 37 to 41 (QLRIK) and Asn-69. Residues Asp-70 and Asp-89 each contribute to the Mg(2+) site. Residue Ser-108 coordinates 4-amino-2-methyl-5-(diphosphooxymethyl)pyrimidine. A 2-[(2R,5Z)-2-carboxy-4-methylthiazol-5(2H)-ylidene]ethyl phosphate-binding site is contributed by 134–136 (TQT). Lys-137 lines the 4-amino-2-methyl-5-(diphosphooxymethyl)pyrimidine pocket. Residues Gly-166 and 186 to 187 (VS) each bind 2-[(2R,5Z)-2-carboxy-4-methylthiazol-5(2H)-ylidene]ethyl phosphate.

It belongs to the thiamine-phosphate synthase family. Mg(2+) is required as a cofactor.

It carries out the reaction 2-[(2R,5Z)-2-carboxy-4-methylthiazol-5(2H)-ylidene]ethyl phosphate + 4-amino-2-methyl-5-(diphosphooxymethyl)pyrimidine + 2 H(+) = thiamine phosphate + CO2 + diphosphate. It catalyses the reaction 2-(2-carboxy-4-methylthiazol-5-yl)ethyl phosphate + 4-amino-2-methyl-5-(diphosphooxymethyl)pyrimidine + 2 H(+) = thiamine phosphate + CO2 + diphosphate. The enzyme catalyses 4-methyl-5-(2-phosphooxyethyl)-thiazole + 4-amino-2-methyl-5-(diphosphooxymethyl)pyrimidine + H(+) = thiamine phosphate + diphosphate. The protein operates within cofactor biosynthesis; thiamine diphosphate biosynthesis; thiamine phosphate from 4-amino-2-methyl-5-diphosphomethylpyrimidine and 4-methyl-5-(2-phosphoethyl)-thiazole: step 1/1. Condenses 4-methyl-5-(beta-hydroxyethyl)thiazole monophosphate (THZ-P) and 2-methyl-4-amino-5-hydroxymethyl pyrimidine pyrophosphate (HMP-PP) to form thiamine monophosphate (TMP). The protein is Thiamine-phosphate synthase of Salmonella typhimurium (strain LT2 / SGSC1412 / ATCC 700720).